The following is a 407-amino-acid chain: Actinorhodin polyketide putative beta-ketoacyl synthase 2 (407 aa).

The 402-residue stretch at 1–402 (MSVLITGVGV…GFNSAAVLRR (402 aa)) folds into the Ketosynthase family 3 (KS3) domain.

This sequence belongs to the thiolase-like superfamily. Beta-ketoacyl-ACP synthases family.

This Streptomyces coelicolor (strain ATCC BAA-471 / A3(2) / M145) protein is Actinorhodin polyketide putative beta-ketoacyl synthase 2.